Here is a 233-residue protein sequence, read N- to C-terminus: 7-cyano-7-deazaguanine synthase (233 aa).

18–28 (FSGGQDSTTCL) contributes to the ATP binding site. Residues C198, C213, C216, and C219 each coordinate Zn(2+).

It belongs to the QueC family. It depends on Zn(2+) as a cofactor.

The enzyme catalyses 7-carboxy-7-deazaguanine + NH4(+) + ATP = 7-cyano-7-deazaguanine + ADP + phosphate + H2O + H(+). It functions in the pathway purine metabolism; 7-cyano-7-deazaguanine biosynthesis. Catalyzes the ATP-dependent conversion of 7-carboxy-7-deazaguanine (CDG) to 7-cyano-7-deazaguanine (preQ(0)). This chain is 7-cyano-7-deazaguanine synthase, found in Wolinella succinogenes (strain ATCC 29543 / DSM 1740 / CCUG 13145 / JCM 31913 / LMG 7466 / NCTC 11488 / FDC 602W) (Vibrio succinogenes).